A 431-amino-acid chain; its full sequence is Synaptotagmin-11 (431 aa).

The Vesicular segment spans residues 1-15; the sequence is MAEITNIRPSFDVSP. The helical transmembrane segment at 16-36 threads the bilayer; the sequence is VVAGLIGASVLVVCVSVTVFV. Residues 37–431 are Cytoplasmic-facing; it reads WSCCHQQAEK…VAKWHSLSEY (395 aa). Ser134 bears the Phosphoserine mark. The tract at residues 134-154 is disordered; it reads SPITSLTPGESKTTSPSSPEE. Residues 140–151 are compositionally biased toward low complexity; the sequence is TPGESKTTSPSS. 2 C2 domains span residues 157 to 279 and 291 to 426; these read MLGS…QLTR and SRGE…AKWH. Asp250, Ser253, and Asp256 together coordinate Ca(2+).

This sequence belongs to the synaptotagmin family. As to quaternary structure, homodimer. Can also form heterodimers. Interacts with PRKN. Interacts (via C2 2 domain) with AGO2 and SND1; the interaction with SND1 is direct. Interacts with KIF1A; the interaction increases in presence of calcium. The cofactor is Ca(2+). Ubiquitinated, at least by PRKN, and targeted to the proteasome complex for degradation. Ubiquitination is inhibited by ATP13A2.

The protein resides in the cytoplasmic vesicle membrane. The protein localises to the perikaryon. It is found in the golgi apparatus. It localises to the trans-Golgi network membrane. Its subcellular location is the recycling endosome membrane. The protein resides in the lysosome membrane. The protein localises to the cytoplasmic vesicle. It is found in the phagosome. It localises to the cell projection. Its subcellular location is the axon. The protein resides in the dendrite. The protein localises to the postsynaptic density. It is found in the clathrin-coated vesicle membrane. Functionally, synaptotagmin family member involved in vesicular and membrane trafficking which does not bind Ca(2+). Inhibits clathrin-mediated and bulk endocytosis, functions to ensure precision in vesicle retrieval. Plays an important role in dopamine transmission by regulating endocytosis and the vesicle-recycling process. Essential component of a neuronal vesicular trafficking pathway that differs from the synaptic vesicle trafficking pathway but is crucial for development and synaptic plasticity. In macrophages and microglia, inhibits the conventional cytokine secretion, of at least IL6 and TNF, and phagocytosis. In astrocytes, regulates lysosome exocytosis, mechanism required for the repair of injured astrocyte cell membrane. Required for the ATP13A2-mediated regulation of the autophagy-lysosome pathway. The sequence is that of Synaptotagmin-11 from Homo sapiens (Human).